The sequence spans 395 residues: Succinyl-diaminopimelate desuccinylase (395 aa).

Histidine 74 contributes to the Zn(2+) binding site. Aspartate 76 is a catalytic residue. Aspartate 107 lines the Zn(2+) pocket. Glutamate 141 acts as the Proton acceptor in catalysis. Zn(2+) contacts are provided by glutamate 142, glutamate 170, and histidine 368.

This sequence belongs to the peptidase M20A family. DapE subfamily. In terms of assembly, homodimer. The cofactor is Zn(2+). Co(2+) is required as a cofactor.

The catalysed reaction is N-succinyl-(2S,6S)-2,6-diaminopimelate + H2O = (2S,6S)-2,6-diaminopimelate + succinate. It functions in the pathway amino-acid biosynthesis; L-lysine biosynthesis via DAP pathway; LL-2,6-diaminopimelate from (S)-tetrahydrodipicolinate (succinylase route): step 3/3. In terms of biological role, catalyzes the hydrolysis of N-succinyl-L,L-diaminopimelic acid (SDAP), forming succinate and LL-2,6-diaminopimelate (DAP), an intermediate involved in the bacterial biosynthesis of lysine and meso-diaminopimelic acid, an essential component of bacterial cell walls. The chain is Succinyl-diaminopimelate desuccinylase from Brucella canis (strain ATCC 23365 / NCTC 10854 / RM-666).